The following is a 143-amino-acid chain: Large-conductance mechanosensitive channel (143 aa).

The next 2 membrane-spanning stretches (helical) occupy residues 10-30 (FAVKGNVMDLAVGVIIGGAFS) and 89-109 (GSFITVAINFVILAFIIFLMV).

The protein belongs to the MscL family. As to quaternary structure, homopentamer.

The protein localises to the cell inner membrane. In terms of biological role, channel that opens in response to stretch forces in the membrane lipid bilayer. May participate in the regulation of osmotic pressure changes within the cell. The protein is Large-conductance mechanosensitive channel of Burkholderia cenocepacia (strain ATCC BAA-245 / DSM 16553 / LMG 16656 / NCTC 13227 / J2315 / CF5610) (Burkholderia cepacia (strain J2315)).